Here is a 176-residue protein sequence, read N- to C-terminus: uncharacterized protein (176 aa).

It localises to the host cytoplasm. This is an uncharacterized protein from Escherichia phage Mu (Bacteriophage Mu).